We begin with the raw amino-acid sequence, 426 residues long: MNIISVGVNHKTAPIEIRERLSLSEVQAKEFLTNLIDDGIAQEAMVVSTCNRTELYVVPGMPEVDGNYMKEFLISYKDAQGEVRPEHFFNRFYCNTARHLFEVSSAVDSLILGEGQILGQVKNAYRIAVEVQSAGILLTRLCHTAFSVAKKVKTKTKIMEGAVSVSYAAVELAQKIFSNLSIKKILLVGAGETGELAAKHMFQKNARNIVITNRTLSKAEALAEELGTNQVLPYESYKDHLHEFDIIITAVSSKEYVLTEPELQQSMQKRRLKPVIILDLGLPRNVDPEIGNLKNMFLKDIDALKHIIDKNLEMRKCELPKVKKIIDEELVGFAQWINTLKVRPTIVDLQSKFLEIKEKELERFRYKVSDAELKRMERLTDRILKKILHHPIKMLKAPVDTADTIPSRVNLVRNIFDLEEQNRLSK.

Substrate contacts are provided by residues 49–52 (TCNR), Ser-109, 114–116 (EGQ), and Gln-120. Cys-50 (nucleophile) is an active-site residue. An NADP(+)-binding site is contributed by 189–194 (GAGETG).

This sequence belongs to the glutamyl-tRNA reductase family. As to quaternary structure, homodimer.

The catalysed reaction is (S)-4-amino-5-oxopentanoate + tRNA(Glu) + NADP(+) = L-glutamyl-tRNA(Glu) + NADPH + H(+). The protein operates within porphyrin-containing compound metabolism; protoporphyrin-IX biosynthesis; 5-aminolevulinate from L-glutamyl-tRNA(Glu): step 1/2. It functions in the pathway porphyrin-containing compound metabolism; chlorophyll biosynthesis. Functionally, catalyzes the NADPH-dependent reduction of glutamyl-tRNA(Glu) to glutamate 1-semialdehyde (GSA). This Chlorobium phaeobacteroides (strain BS1) protein is Glutamyl-tRNA reductase.